The following is a 320-amino-acid chain: Cytochrome f (320 aa).

Positions 1–35 (MQTRNTFSWIREEITRSISVSLMIYIITWASISSA) are cleaved as a signal peptide. 4 residues coordinate heme: tyrosine 36, cysteine 56, cysteine 59, and histidine 60. The chain crosses the membrane as a helical span at residues 286–306 (VQGLLFFLGSVVLAQIFLVLK).

It belongs to the cytochrome f family. In terms of assembly, the 4 large subunits of the cytochrome b6-f complex are cytochrome b6, subunit IV (17 kDa polypeptide, petD), cytochrome f and the Rieske protein, while the 4 small subunits are PetG, PetL, PetM and PetN. The complex functions as a dimer. The cofactor is heme.

The protein localises to the plastid. Its subcellular location is the chloroplast thylakoid membrane. In terms of biological role, component of the cytochrome b6-f complex, which mediates electron transfer between photosystem II (PSII) and photosystem I (PSI), cyclic electron flow around PSI, and state transitions. This Crucihimalaya wallichii (Rock-cress) protein is Cytochrome f.